The following is a 415-amino-acid chain: Methylthioribose-1-phosphate isomerase (415 aa).

Asp284 (proton donor) is an active-site residue.

It belongs to the eIF-2B alpha/beta/delta subunits family. MtnA subfamily.

Its subcellular location is the cytoplasm. The protein localises to the nucleus. It catalyses the reaction 5-(methylsulfanyl)-alpha-D-ribose 1-phosphate = 5-(methylsulfanyl)-D-ribulose 1-phosphate. It participates in amino-acid biosynthesis; L-methionine biosynthesis via salvage pathway; L-methionine from S-methyl-5-thio-alpha-D-ribose 1-phosphate: step 1/6. Functionally, catalyzes the interconversion of methylthioribose-1-phosphate (MTR-1-P) into methylthioribulose-1-phosphate (MTRu-1-P). The sequence is that of Methylthioribose-1-phosphate isomerase from Candida glabrata (strain ATCC 2001 / BCRC 20586 / JCM 3761 / NBRC 0622 / NRRL Y-65 / CBS 138) (Yeast).